A 155-amino-acid polypeptide reads, in one-letter code: Molybdopterin synthase catalytic subunit 1 (155 aa).

Substrate contacts are provided by residues 101–102, K117, and 124–126; these read HR and KKE.

The protein belongs to the MoaE family. MOCS2B subfamily. As to quaternary structure, heterotetramer; composed of 2 small (MOCS2A) and 2 large (MOCS2B) subunits.

The protein resides in the cytoplasm. The catalysed reaction is 2 [molybdopterin-synthase sulfur-carrier protein]-C-terminal-Gly-aminoethanethioate + cyclic pyranopterin phosphate + H2O = molybdopterin + 2 [molybdopterin-synthase sulfur-carrier protein]-C-terminal Gly-Gly + 2 H(+). It participates in cofactor biosynthesis; molybdopterin biosynthesis. Its function is as follows. Catalytic subunit of the molybdopterin synthase complex, a complex that catalyzes the conversion of precursor Z into molybdopterin. Acts by mediating the incorporation of 2 sulfur atoms from thiocarboxylated MOCS2A into precursor Z to generate a dithiolene group. This Aedes aegypti (Yellowfever mosquito) protein is Molybdopterin synthase catalytic subunit 1.